The following is a 336-amino-acid chain: Flavonoid 4'-O-methyltransferase 3 (336 aa).

Residues Tyr140 and Asp203 each coordinate S-adenosyl-L-methionine. His241 acts as the Proton acceptor in catalysis.

This sequence belongs to the class I-like SAM-binding methyltransferase superfamily. Cation-independent O-methyltransferase family. Homodimer. In terms of tissue distribution, expressed in leaves.

It catalyses the reaction scutellarein 7-methyl ether + S-adenosyl-L-methionine = ladanein + S-adenosyl-L-homocysteine + H(+). The catalysed reaction is cirsimaritin + S-adenosyl-L-methionine = salvigenin + S-adenosyl-L-homocysteine + H(+). It carries out the reaction cirsiliol + S-adenosyl-L-methionine = eupatorin + S-adenosyl-L-homocysteine + H(+). The enzyme catalyses genkwanin + S-adenosyl-L-methionine = apigenin 4',7-dimethyl ether + S-adenosyl-L-homocysteine. Its pathway is flavonoid metabolism. With respect to regulation, substrate inhibition by genkwanin (GENK) at concentrations above 2.5 mM. Flavonoid 4'-O-methyltransferase involved in the biosynthesis of polymethoxylated flavonoids natural products such as nevadensin and salvigenin, aroma compounds which contribute to the flavor of sweet basil, and exhibit pharmacological activities such as anti-allergic, anti-oxidant, antibacterial, anti-proliferative, and anti-inflammatory effects. Catalyzes S-adenosylmethionine-dependent regioselective 4'-O-methylation of flavonoids; active on various hydroxylated flavonoid substrates, including scutellarein-7-methyl ether (SCU7Me) and cirsimaritin (CIRM), and, with a lower efficiency, hispidulin, ladanein (LAD), cirsioliol (CIRL) and genkwanin (GENK). In Ocimum basilicum (Sweet basil), this protein is Flavonoid 4'-O-methyltransferase 3.